The following is a 493-amino-acid chain: Trans-aconitate decarboxylase 1 (493 aa).

The disordered stretch occupies residues 1–22 (MAPALNANPTTKRDELSAPSAS).

This sequence belongs to the class-II fumarase/aspartase family.

The protein resides in the cytoplasm. The protein localises to the cytosol. Its subcellular location is the nucleus. The catalysed reaction is trans-aconitate + H(+) = itaconate + CO2. The protein operates within secondary metabolite biosynthesis. Trans-aconitate decarboxylase; part of the gene cluster that mediates the biosynthesis of itaconic acid and 2-hydroxyparaconate. Cis-aconitate is secreted by the mitochondrial tricarboxylate transporter MTT1. In the cytosol cis-aconitate is converted into trans-aconitate via isomerization by the aconitate-delta-isomerase ADI1. Decarboxylation of trans-aconitate by the trans-aconitate decarboxylase TAD1 then leads then to the production of itaconic acid. The cytochrome P450 monooxygenase CYP3 further converts itaconate to 2-hydroxyparaconate via oxidation of the double bond, leading to a transient epoxide, which can subsequently be lactonized to produce 2-hydroxyparaconate. Secretion of itaconate and possibly 2-hydroxyparaconate into the medium is mediated by the major facilitator ITP1. The glyoxalase domain-containing protein RDO1 is not involved in the biosynthesis of itaconate and 2-hydroxyparaconate, however, it might play a role in the further conversion of 2-hydroxyparaconate to itatartarate. The sequence is that of Trans-aconitate decarboxylase 1 from Mycosarcoma maydis (Corn smut fungus).